Here is a 289-residue protein sequence, read N- to C-terminus: 4-diphosphocytidyl-2-C-methyl-D-erythritol kinase (289 aa).

The active site involves lysine 10. An ATP-binding site is contributed by 94-104; sequence PVAAGLAGGSS. Aspartate 136 is an active-site residue.

Belongs to the GHMP kinase family. IspE subfamily.

It catalyses the reaction 4-CDP-2-C-methyl-D-erythritol + ATP = 4-CDP-2-C-methyl-D-erythritol 2-phosphate + ADP + H(+). It participates in isoprenoid biosynthesis; isopentenyl diphosphate biosynthesis via DXP pathway; isopentenyl diphosphate from 1-deoxy-D-xylulose 5-phosphate: step 3/6. In terms of biological role, catalyzes the phosphorylation of the position 2 hydroxy group of 4-diphosphocytidyl-2C-methyl-D-erythritol. In Geobacillus sp. (strain WCH70), this protein is 4-diphosphocytidyl-2-C-methyl-D-erythritol kinase.